A 376-amino-acid chain; its full sequence is Cyclin-D3-1 (376 aa).

Positions 298 to 376 (KRKSHDSSSS…HLPWAIVATP (79 aa)) are disordered. Residues 321 to 349 (NSDESSNDSWSASSCNPPTSSSSPQQQPP) are compositionally biased toward low complexity. Residues 354 to 363 (RGAEENEKKK) are compositionally biased toward basic and acidic residues.

Belongs to the cyclin family. Cyclin D subfamily. As to quaternary structure, interacts with the C-terminal domain of CDKA-1. Interacts with KRP1/ICK1. Interacts with KRP6. Phosphorylated. In terms of tissue distribution, highly expressed in roots and at lower levels in leaves and flowers. Expressed in vegetative shoot meristem and inflorescence.

Its function is as follows. Involved in the control of the cell cycle at the G1/S (start) transition. Activates the G1/S phase transition in response to cytokinin hormone signal, but declines in response to sucrose starvation leading to G1 arrest. Involved in the induction of mitotic cell division. Plays an important role in the switch from cell proliferation to the final stages of differentiation during plant development. May not be involved in the activation of cell cycle in the root apical meristem (RAM) in the early phase of seed germination. Promotes divisions in the guard cells (GCs) after the guard mother cells (GMC) symmetric division. The sequence is that of Cyclin-D3-1 (CYCD3-1) from Arabidopsis thaliana (Mouse-ear cress).